The primary structure comprises 61 residues: N-acetyl-D-glucosamine kinase (61 aa).

At Y30 the chain carries Phosphotyrosine. ATP is bound at residue S45.

Belongs to the eukaryotic-type N-acetylglucosamine kinase family. In terms of assembly, homodimer.

It catalyses the reaction N-acetyl-D-glucosamine + ATP = N-acetyl-D-glucosamine 6-phosphate + ADP + H(+). It carries out the reaction aldehydo-N-acetyl-D-mannosamine + ATP = aldehydo-N-acetyl-D-mannosamine 6-phosphate + ADP + H(+). The enzyme catalyses N-acetyl-D-muramoyl-L-alanyl-D-isoglutamine + ATP = 6-O-phospho-N-acetyl-D-muramoyl-L-alanyl-D-isoglutamine + ADP + H(+). The protein operates within amino-sugar metabolism; N-acetylneuraminate degradation. Functionally, converts endogenous N-acetylglucosamine (GlcNAc), a major component of complex carbohydrates, from lysosomal degradation or nutritional sources into GlcNAc 6-phosphate. Also has N-acetylmannosamine (ManNAc) kinase activity. Involved in the N-glycolylneuraminic acid (Neu5Gc) degradation pathway. Also involved in innate immunity by promoting detection of bacterial peptidoglycan by NOD2: acts by catalyzing phosphorylation of muramyl dipeptide (MDP), a fragment of bacterial peptidoglycan, to generate 6-O-phospho-muramyl dipeptide, which acts as a direct ligand for NOD2. The chain is N-acetyl-D-glucosamine kinase from Mesocricetus auratus (Golden hamster).